We begin with the raw amino-acid sequence, 250 residues long: Ubiquinone/menaquinone biosynthesis C-methyltransferase UbiE (250 aa).

S-adenosyl-L-methionine is bound by residues Thr73, Asp94, 122 to 123 (NA), and Ser139.

The protein belongs to the class I-like SAM-binding methyltransferase superfamily. MenG/UbiE family.

It carries out the reaction a 2-demethylmenaquinol + S-adenosyl-L-methionine = a menaquinol + S-adenosyl-L-homocysteine + H(+). The enzyme catalyses a 2-methoxy-6-(all-trans-polyprenyl)benzene-1,4-diol + S-adenosyl-L-methionine = a 5-methoxy-2-methyl-3-(all-trans-polyprenyl)benzene-1,4-diol + S-adenosyl-L-homocysteine + H(+). The protein operates within quinol/quinone metabolism; menaquinone biosynthesis; menaquinol from 1,4-dihydroxy-2-naphthoate: step 2/2. Its pathway is cofactor biosynthesis; ubiquinone biosynthesis. Its function is as follows. Methyltransferase required for the conversion of demethylmenaquinol (DMKH2) to menaquinol (MKH2) and the conversion of 2-polyprenyl-6-methoxy-1,4-benzoquinol (DDMQH2) to 2-polyprenyl-3-methyl-6-methoxy-1,4-benzoquinol (DMQH2). This chain is Ubiquinone/menaquinone biosynthesis C-methyltransferase UbiE, found in Francisella tularensis subsp. tularensis (strain WY96-3418).